The chain runs to 98 residues: DNA-binding protein Fis (98 aa).

The H-T-H motif DNA-binding region spans 74–93 (QTRAATMLGINRGTLRKKLK).

It belongs to the transcriptional regulatory Fis family. Homodimer.

Its function is as follows. Activates ribosomal RNA transcription. Plays a direct role in upstream activation of rRNA promoters. In Haemophilus ducreyi (strain 35000HP / ATCC 700724), this protein is DNA-binding protein Fis.